Consider the following 500-residue polypeptide: NAD(P)H-quinone oxidoreductase chain 4, chloroplastic (500 aa).

14 helical membrane passes run 4–24 (FPWL…ILFL), 37–57 (LCIC…HFQL), 84–104 (GISI…TLAA), 111–129 (SRVF…IGPF), 134–154 (LLLF…LLSM), 167–187 (FILY…GICL), 208–228 (ALEM…SPII), 242–262 (HYST…YGLV), 272–292 (AHSI…IYAA), 305–325 (IAYS…SIND), 330–350 (GAIL…FLAG), 386–406 (LALP…GILT), 416–436 (ILIT…SLSM), and 462–482 (FFVS…PDFV).

Belongs to the complex I subunit 4 family.

Its subcellular location is the plastid. The protein resides in the chloroplast thylakoid membrane. The enzyme catalyses a plastoquinone + NADH + (n+1) H(+)(in) = a plastoquinol + NAD(+) + n H(+)(out). It carries out the reaction a plastoquinone + NADPH + (n+1) H(+)(in) = a plastoquinol + NADP(+) + n H(+)(out). In Morus indica (Mulberry), this protein is NAD(P)H-quinone oxidoreductase chain 4, chloroplastic.